The following is a 245-amino-acid chain: 14-3-3 protein zeta (245 aa).

This sequence belongs to the 14-3-3 family. Homodimer. In terms of tissue distribution, present in all adult tissues examined with the highest levels in the brain.

It localises to the cytoplasm. Functionally, adapter protein implicated in the regulation of a large spectrum of both general and specialized signaling pathways. Binds to a large number of partners, usually by recognition of a phosphoserine or phosphothreonine motif. Binding generally results in the modulation of the activity of the binding partner. The chain is 14-3-3 protein zeta (ywhaz) from Xenopus laevis (African clawed frog).